Here is a 1638-residue protein sequence, read N- to C-terminus: Ciliary rootlet coiled-coil protein 2 (1638 aa).

The segment covering M1 to G20 has biased composition (polar residues). Disordered regions lie at residues M1–L21, R39–S92, A396–H423, and T1168–E1213. A compositionally biased stretch (low complexity) spans S67–P82. Residues T85–E144 adopt a coiled-coil conformation. The segment covering S406–S421 has biased composition (polar residues). Coiled-coil stretches lie at residues L426–E1234 and L1281–A1315. The segment covering R1180–V1193 has biased composition (basic and acidic residues). 2 disordered regions span residues R1338 to D1383 and A1506 to S1551. Positions S1349–Y1371 are enriched in polar residues. Coiled coils occupy residues R1412 to A1506 and R1542 to E1576.

The protein belongs to the rootletin family.

This chain is Ciliary rootlet coiled-coil protein 2, found in Mus musculus (Mouse).